The chain runs to 355 residues: Probable aldo-keto reductase 3 (355 aa).

The active-site Proton donor is Tyr-70. His-138 serves as a coordination point for substrate. Ser-217–Gly-227 contributes to the NADP(+) binding site.

It belongs to the aldo/keto reductase family.

This is Probable aldo-keto reductase 3 from Oryza sativa subsp. japonica (Rice).